Reading from the N-terminus, the 359-residue chain is 3-dehydroquinate synthase (359 aa).

NAD(+) is bound by residues 72–77 (EGEIHK), 106–110 (GVIGD), 130–131 (TS), Lys143, Lys152, and 170–173 (CLKT). Residues Glu185, His248, and His264 each coordinate Zn(2+).

This sequence belongs to the sugar phosphate cyclases superfamily. Dehydroquinate synthase family. Requires Co(2+) as cofactor. Zn(2+) is required as a cofactor. NAD(+) serves as cofactor.

Its subcellular location is the cytoplasm. It catalyses the reaction 7-phospho-2-dehydro-3-deoxy-D-arabino-heptonate = 3-dehydroquinate + phosphate. It functions in the pathway metabolic intermediate biosynthesis; chorismate biosynthesis; chorismate from D-erythrose 4-phosphate and phosphoenolpyruvate: step 2/7. Catalyzes the conversion of 3-deoxy-D-arabino-heptulosonate 7-phosphate (DAHP) to dehydroquinate (DHQ). The protein is 3-dehydroquinate synthase of Dehalococcoides mccartyi (strain ATCC BAA-2100 / JCM 16839 / KCTC 5957 / BAV1).